The following is a 621-amino-acid chain: Nitrate reductase [NADH] 1 (621 aa).

A Cytochrome b5 heme-binding domain is found at Gly-249 to Ile-324. The heme site is built by His-284 and His-307. The region spanning Arg-361–Thr-473 is the FAD-binding FR-type domain. FAD-binding positions include Arg-413–Thr-416, Leu-430–Lys-432, Phe-435, Leu-447–Thr-449, Ser-497, and Thr-500.

It belongs to the nitrate reductase family. In terms of assembly, homodimer. FAD serves as cofactor. Requires heme as cofactor. It depends on Mo-molybdopterin as a cofactor.

The enzyme catalyses nitrite + NAD(+) + H2O = nitrate + NADH + H(+). In terms of biological role, nitrate reductase is a key enzyme involved in the first step of nitrate assimilation in plants, fungi and bacteria. This is Nitrate reductase [NADH] 1 from Zea mays (Maize).